The chain runs to 181 residues: Adenylate kinase (181 aa).

10-15 (GAGKGT) contacts ATP. The interval 30–59 (STGDLFRANIGEGTPLGKEAKSYIDAGKLV) is NMP. Residues threonine 31, arginine 36, 57-59 (KLV), 85-88 (GFPR), and glutamine 92 each bind AMP. The segment at 126 to 132 (ARGRADD) is LID. Arginine 127 provides a ligand contact to ATP. AMP is bound by residues arginine 129 and arginine 140. Glycine 166 is an ATP binding site.

It belongs to the adenylate kinase family. Monomer.

It is found in the cytoplasm. The catalysed reaction is AMP + ATP = 2 ADP. It participates in purine metabolism; AMP biosynthesis via salvage pathway; AMP from ADP: step 1/1. Catalyzes the reversible transfer of the terminal phosphate group between ATP and AMP. Plays an important role in cellular energy homeostasis and in adenine nucleotide metabolism. The chain is Adenylate kinase from Corynebacterium diphtheriae (strain ATCC 700971 / NCTC 13129 / Biotype gravis).